Here is a 508-residue protein sequence, read N- to C-terminus: Abl interactor 1 (508 aa).

An N-acetylalanine modification is found at Ala2. The segment at 18–79 is required for binding to WASF1; sequence ALIESYQNLT…NNVLQLLDIQ (62 aa). The t-SNARE coiled-coil homology domain maps to 45–107; sequence KALEETKAYT…DIHKEKVARR (63 aa). Tyr53 is subject to Phosphotyrosine. 3 disordered regions span residues 159–290, 306–375, and 388–421; these read KHGN…APPL, APGS…LTPQ, and NIAD…PVDY. The segment covering 161–175 has biased composition (polar residues); the sequence is GNNQPARTGTLSRTN. Phosphothreonine is present on residues Thr174 and Thr178. Phosphoserine occurs at positions 183 and 187. Tyr213 is modified (phosphotyrosine; by ABL1). Thr215 is subject to Phosphothreonine. 3 positions are modified to phosphoserine: Ser216, Ser222, and Ser225. Residues 222–235 are compositionally biased toward polar residues; it reads SQHSPGRTASLNQR. Residues 248–258 show a composition bias toward low complexity; sequence SRENSGSSSIG. Residues 278–290 show a composition bias toward pro residues; it reads VPPPSGAPPAPPL. The segment covering 307–322 has biased composition (polar residues); the sequence is PGSQYGTMTRQISRHN. A phosphoserine mark is found at Ser319 and Ser323. Positions 337-347 are enriched in polar residues; that stretch reads PSVTAQFSAQP. Composition is skewed to pro residues over residues 393–403 and 410–419; these read PTPPPPPPPDD and SPPPPPPPPV. The region spanning 446–505 is the SH3 domain; that stretch reads NYIEKVVAIYDYTKDKDDELSFMEGAIIYVIKKNDDGWYEGVCNRVTGLFPGNYVESIMH. Tyr455 is modified (phosphotyrosine). The residue at position 466 (Ser466) is a Phosphoserine. Thr507 is subject to Phosphothreonine.

The protein belongs to the ABI family. In terms of assembly, interacts with ABL1, ENAH, STX1A, SNAP25, VAMP2, EPS8, and through its N-terminus with WASF1. Part of a complex consisting of ABI1, STX1A and SNAP25. Part of a complex consisting of ABI1, EPS8 and SOS1. Interacts with SOS1, SOS2, GRB2, SPTA1 and the first SH3 domain of NCK1. Isoform 6 does not interact with NCK1. Component of the WAVE2 complex composed of ABI1, CYFIP1/SRA1, NCKAP1/NAP1 (NCKAP1l/HEM1 in hematopoietic cells) and WASF2/WAVE2. Interacts (via SH3 domain) with SHANK2 and SHANK3, but not SHANK1; the interaction is direct. Interacts with the heterodimer MYC:MAX; the interaction may enhance MYC:MAX transcriptional activity. Interacts with FNBP1L (via the SH3 domain), WASF2, and CDC42, but only in the presence of FNBP1L. (Microbial infection) Interacts with human cytomegalovirus/HHV-5 protein UL135. Post-translationally, phosphorylated on tyrosine residues after serum stimulation or induction by v-Abl. Seems to be phosphorylated at Tyr-53 by ABL1, required for nuclear but not for synaptic localization. In terms of tissue distribution, widely expressed, with highest expression in brain.

The protein resides in the cytoplasm. Its subcellular location is the nucleus. It localises to the cell projection. It is found in the lamellipodium. The protein localises to the filopodium. The protein resides in the growth cone. Its subcellular location is the postsynaptic density. It localises to the cytoskeleton. May act in negative regulation of cell growth and transformation by interacting with nonreceptor tyrosine kinases ABL1 and/or ABL2. May play a role in regulation of EGF-induced Erk pathway activation. Involved in cytoskeletal reorganization and EGFR signaling. Together with EPS8 participates in transduction of signals from Ras to Rac. In vitro, a trimeric complex of ABI1, EPS8 and SOS1 exhibits Rac specific guanine nucleotide exchange factor (GEF) activity and ABI1 seems to act as an adapter in the complex. Regulates ABL1/c-Abl-mediated phosphorylation of ENAH. Recruits WASF1 to lamellipodia and there seems to regulate WASF1 protein level. In brain, seems to regulate the dendritic outgrowth and branching as well as to determine the shape and number of synaptic contacts of developing neurons. This is Abl interactor 1 from Homo sapiens (Human).